Here is a 183-residue protein sequence, read N- to C-terminus: Small ribosomal subunit protein cS23y (183 aa).

This sequence belongs to the chloroplast-specific ribosomal protein cS23 family. Part of the 30S ribosomal subunit.

It is found in the plastid. It localises to the chloroplast. In terms of biological role, component of the chloroplast ribosome (chloro-ribosome), a dedicated translation machinery responsible for the synthesis of chloroplast genome-encoded proteins, including proteins of the transcription and translation machinery and components of the photosynthetic apparatus. This is Small ribosomal subunit protein cS23y from Arabidopsis thaliana (Mouse-ear cress).